The primary structure comprises 166 residues: NADPH-dependent 7-cyano-7-deazaguanine reductase (166 aa).

Residue Cys-57 is the Thioimide intermediate of the active site. Asp-64 acts as the Proton donor in catalysis. Substrate-binding positions include 79–81 and 98–99; these read VES and HE.

Belongs to the GTP cyclohydrolase I family. QueF type 1 subfamily.

Its subcellular location is the cytoplasm. It catalyses the reaction 7-aminomethyl-7-carbaguanine + 2 NADP(+) = 7-cyano-7-deazaguanine + 2 NADPH + 3 H(+). It participates in tRNA modification; tRNA-queuosine biosynthesis. Functionally, catalyzes the NADPH-dependent reduction of 7-cyano-7-deazaguanine (preQ0) to 7-aminomethyl-7-deazaguanine (preQ1). The sequence is that of NADPH-dependent 7-cyano-7-deazaguanine reductase from Staphylococcus aureus (strain JH1).